The chain runs to 328 residues: Homeobox protein Hox-D1 (328 aa).

An Antp-type hexapeptide motif is present at residues 204-209 (TFEWMK). Positions 229–288 (SSAIRTNFSTKQLTELEKEFHFNKYLTRARRIEIANCLHLNDTQVKIWFQNRRMKQKKRE) form a DNA-binding region, homeobox. The segment at 305–328 (PLSGTTPTKFIKNPGSPSQSQEPS) is disordered. Residues 319-328 (GSPSQSQEPS) are compositionally biased toward polar residues.

Belongs to the Antp homeobox family. Labial subfamily.

It is found in the nucleus. Functionally, sequence-specific transcription factor which is part of a developmental regulatory system that provides cells with specific positional identities on the anterior-posterior axis. Acts on the anterior body structures. This is Homeobox protein Hox-D1 (HOXD1) from Homo sapiens (Human).